The primary structure comprises 383 residues: Succinyl-diaminopimelate desuccinylase (383 aa).

Histidine 79 serves as a coordination point for Zn(2+). The active site involves aspartate 81. Residue aspartate 110 participates in Zn(2+) binding. Glutamate 141 acts as the Proton acceptor in catalysis. 3 residues coordinate Zn(2+): glutamate 142, glutamate 170, and histidine 355.

The protein belongs to the peptidase M20A family. DapE subfamily. As to quaternary structure, homodimer. Zn(2+) serves as cofactor. It depends on Co(2+) as a cofactor.

It catalyses the reaction N-succinyl-(2S,6S)-2,6-diaminopimelate + H2O = (2S,6S)-2,6-diaminopimelate + succinate. It functions in the pathway amino-acid biosynthesis; L-lysine biosynthesis via DAP pathway; LL-2,6-diaminopimelate from (S)-tetrahydrodipicolinate (succinylase route): step 3/3. Its function is as follows. Catalyzes the hydrolysis of N-succinyl-L,L-diaminopimelic acid (SDAP), forming succinate and LL-2,6-diaminopimelate (DAP), an intermediate involved in the bacterial biosynthesis of lysine and meso-diaminopimelic acid, an essential component of bacterial cell walls. The sequence is that of Succinyl-diaminopimelate desuccinylase from Helicobacter pylori (strain Shi470).